The following is a 389-amino-acid chain: Gustatory receptor for bitter taste 22e (389 aa).

The Cytoplasmic portion of the chain corresponds to 1-14 (MFRPSGSGYRQKWT). A helical transmembrane segment spans residues 15–35 (GLTLKGALYGSWILGVFPFAY). Over 36-46 (DSWTRTLRRSK) the chain is Extracellular. A helical transmembrane segment spans residues 47 to 67 (WLIAYGFVLNAAFILLVVTND). Topologically, residues 68–142 (TESETPLRME…SLEECISFDR (75 aa)) are cytoplasmic. The chain crosses the membrane as a helical span at residues 143 to 163 (FVLYKGFSVVLELVSMLVLEL). The Extracellular portion of the chain corresponds to 164–170 (GMSPNYS). Asn-168 carries N-linked (GlcNAc...) asparagine glycosylation. Residues 171–191 (AQFFIGLGSLCLMLLAVLLGA) form a helical membrane-spanning segment. Residues 192–254 (SHFHLAVVFV…QRLASIYDYQ (63 aa)) are Cytoplasmic-facing. A helical membrane pass occupies residues 255–275 (MVMVMVSFLIANVLGIYFFII). The Extracellular segment spans residues 276 to 287 (YSISLNKSLDFK). Residue Asn-281 is glycosylated (N-linked (GlcNAc...) asparagine). The helical transmembrane segment at 288–308 (ILVFVQALVINMLDFWLNVEI) threads the bilayer. At 309–366 (CELAERTGRQTSTILKLFNDIENIDEKLERSITDFALFCSHRRLRFHHCGLFYVNYEM) the chain is on the cytoplasmic side. Residues 367 to 387 (GFRMAITSFLYLLFLIQFDYW) form a helical membrane-spanning segment. Residues 388 to 389 (NL) are Extracellular-facing.

It belongs to the insect chemoreceptor superfamily. Gustatory receptor (GR) family. Gr22e subfamily. As to expression, taste bristles on the labial palp, labral and cibarial sense organs, chemosensory bristles on the leg and anterior wing margin. In larvae, is expressed in neurons of the terminal external chemosensory organ and in the dorsal pharyngeal sense organ. Neurons expressing Gr22e also express Gr66a and correspond to taste neurons that mediate sensitivity to bitter compounds.

Its subcellular location is the cell membrane. Its function is as follows. Gustatory receptor which mediates acceptance or avoidance behavior, depending on its substrates. Seems to be involved in the sensing of bitter taste since it is expressed in neurons that mediate sensitivity to bitter compounds which are also avoidance-type taste neurons. In Drosophila melanogaster (Fruit fly), this protein is Gustatory receptor for bitter taste 22e (Gr22e).